Consider the following 1463-residue polypeptide: Probable oxidoreductase PXDNL (1463 aa).

The signal sequence occupies residues Met-1–Pro-23. The 27-residue stretch at Cys-24 to Gln-50 folds into the LRRNT domain. LRR repeat units follow at residues Gln-51–Lys-72, Asn-75–Gly-96, Asn-99–Gly-120, Ser-123–Asp-144, and Arg-147–Asn-168. In terms of domain architecture, LRRCT spans Asn-180–Ser-233. 4 consecutive Ig-like C2-type domains span residues Pro-234–Arg-322, Pro-330–Ile-414, Pro-419–Thr-504, and Pro-507–Thr-596. Disulfide bonds link Cys-255–Cys-305, Cys-351–Cys-398, Cys-440–Cys-488, Cys-532–Cys-580, and Cys-718–Cys-734. Asn-387 carries N-linked (GlcNAc...) asparagine glycosylation. The active-site Proton acceptor is His-812. Asp-813 contributes to the Ca(2+) binding site. Cystine bridges form between Cys-832/Cys-842 and Cys-836/Cys-859. Positions 891, 893, 895, and 897 each coordinate Ca(2+). Cys-944 and Cys-953 are oxidised to a cystine. Residue His-1057 coordinates heme b. 2 disulfides stabilise this stretch: Cys-1160/Cys-1217 and Cys-1258/Cys-1284. In terms of domain architecture, VWFC spans Ala-1393–Arg-1451.

This sequence belongs to the peroxidase family. XPO subfamily. In terms of assembly, interacts with PXDN; this interaction inhibits the peroxidase activity of PXDN. It depends on heme b as a cofactor. Phosphorylation by SRC on tyrosine residues is required for targeting to polysomes. In terms of tissue distribution, the 57 kDa isoform PMR1 is the only form detected at protein levels in human cell lines. Expressed in heart.

It localises to the secreted. The protein resides in the endoplasmic reticulum. Its subcellular location is the cell membrane. It is found in the cytoplasm. Its function is as follows. Probable oxidoreductase. Lacks peroxidase activity. Inhibits the peroxidase activity of PXDN through its interaction. In terms of biological role, endonuclease selectively degrading some target mRNAs while they are engaged by translating ribosomes, among which albumin and beta-globin mRNAs. The chain is Probable oxidoreductase PXDNL from Homo sapiens (Human).